Consider the following 65-residue polypeptide: Large ribosomal subunit protein uL29 (65 aa).

It belongs to the universal ribosomal protein uL29 family.

This is Large ribosomal subunit protein uL29 from Desulforapulum autotrophicum (strain ATCC 43914 / DSM 3382 / VKM B-1955 / HRM2) (Desulfobacterium autotrophicum).